We begin with the raw amino-acid sequence, 170 residues long: Keratin-associated protein 9-2 (170 aa).

Tandem repeats lie at residues 8–12, 13–17, 18–22, 37–41, 42–46, 51–55, 61–65, 66–70, 75–79, 80–84, 85–89, 90–94, 95–99, 140–144, 145–149, 150–154, and 164–168. Residues 8–168 are 17 X 5 AA repeats of C-C-[RQVSGE]-[SPTQ]-[TASP]; sequence CCQPTCCRTT…TCVSSCCQPS (161 aa).

The protein belongs to the KRTAP type 9 family. In terms of assembly, interacts with hair keratins.

In terms of biological role, in the hair cortex, hair keratin intermediate filaments are embedded in an interfilamentous matrix, consisting of hair keratin-associated proteins (KRTAP), which are essential for the formation of a rigid and resistant hair shaft through their extensive disulfide bond cross-linking with abundant cysteine residues of hair keratins. The matrix proteins include the high-sulfur and high-glycine-tyrosine keratins. The sequence is that of Keratin-associated protein 9-2 (KRTAP9-2) from Pan troglodytes (Chimpanzee).